The sequence spans 377 residues: D-alanine--D-alanine ligase (377 aa).

The ATP-grasp domain maps to 137–346 (KELMTVNGIR…RSQQAEKLIQ (210 aa)). ATP is bound at residue 167–222 (SKQLGEVVFVKAANQGSSVGVSRVTNAEEYENALRDSFQYDEKLLVEKAVESPTEL). Positions 300, 313, and 315 each coordinate Mg(2+).

Belongs to the D-alanine--D-alanine ligase family. Mg(2+) serves as cofactor. Requires Mn(2+) as cofactor.

It is found in the cytoplasm. The catalysed reaction is 2 D-alanine + ATP = D-alanyl-D-alanine + ADP + phosphate + H(+). It participates in cell wall biogenesis; peptidoglycan biosynthesis. In terms of biological role, cell wall formation. This chain is D-alanine--D-alanine ligase, found in Oenococcus oeni (strain ATCC BAA-331 / PSU-1).